The chain runs to 874 residues: Ectonucleotide pyrophosphatase/phosphodiesterase family member 3 (874 aa).

The Cytoplasmic segment spans residues 1 to 11 (MQSTLNLSTEE). Residues 12–30 (PVKRNTVKKYKIICIVLLI) form a helical; Signal-anchor for type II membrane protein membrane-spanning segment. Residues 31–874 (LLVAVSLALG…TYLPVFETVI (844 aa)) lie on the Extracellular side of the membrane. SMB domains follow at residues 50-93 (EQGS…VQST) and 94-138 (QIWT…GETS). Cystine bridges form between C54–C71, C58–C89, C69–C82, C75–C81, C98–C115, C103–C133, C113–C126, C119–C125, C144–C190, and C152–C364. A Cell attachment site motif is present at residues 78-80 (RGD). Residues 160 to 544 (PVILFSMDGF…HGSLNHLLKV (385 aa)) form a phosphodiesterase region. Residue D167 coordinates Zn(2+). ATP is bound at residue K204. T205 lines the Zn(2+) pocket. T205 acts as the Nucleophile in catalysis. Residue N226 coordinates ATP. N236 is a glycosylation site (N-linked (GlcNAc...) asparagine). D275 is an ATP binding site. Residue N279 is glycosylated (N-linked (GlcNAc...) asparagine). Residue Y289 participates in ATP binding. N290 carries N-linked (GlcNAc...) asparagine glycosylation. Residues D325, H329, D372, and H373 each contribute to the Zn(2+) site. 6 cysteine pairs are disulfide-bonded: C380-C477, C428-C817, C561-C622, C574-C678, C576-C663, and C786-C796. A glycan (N-linked (GlcNAc...) asparagine) is linked at N425. A Zn(2+)-binding site is contributed by H482. The N-linked (GlcNAc...) asparagine glycan is linked to N532. Residues 581-874 (TNSDLERVNQ…TYLPVFETVI (294 aa)) are nuclease. N677, N686, and N698 each carry an N-linked (GlcNAc...) asparagine glycan. Ca(2+) is bound by residues D751, D755, H757, and D759. N-linked (GlcNAc...) asparagine glycans are attached at residues N770, N788, and N820.

The protein belongs to the nucleotide pyrophosphatase/phosphodiesterase family. As to quaternary structure, monomer and homodimer. It depends on Zn(2+) as a cofactor. In terms of processing, N-glycosylated. N-glycosylation is necessary for normal transport to the cell membrane, but is not the apical targeting signal.

It is found in the cell membrane. The protein localises to the apical cell membrane. Its subcellular location is the secreted. It catalyses the reaction a ribonucleoside 5'-triphosphate + H2O = a ribonucleoside 5'-phosphate + diphosphate + H(+). The enzyme catalyses ATP + H2O = AMP + diphosphate + H(+). The catalysed reaction is CTP + H2O = CMP + diphosphate + H(+). It carries out the reaction GTP + H2O = GMP + diphosphate + H(+). It catalyses the reaction UTP + H2O = UMP + diphosphate + H(+). The enzyme catalyses UDP-N-acetyl-alpha-D-glucosamine + H2O = N-acetyl-alpha-D-glucosamine 1-phosphate + UMP + 2 H(+). The catalysed reaction is P(1),P(3)-bis(5'-adenosyl) triphosphate + H2O = AMP + ADP + 2 H(+). It carries out the reaction P(1),P(4)-bis(5'-adenosyl) tetraphosphate + H2O = AMP + ATP + 2 H(+). It catalyses the reaction P(1),P(5)-bis(5'-adenosyl) pentaphosphate + H2O = adenosine 5'-tetraphosphate + AMP + 2 H(+). The enzyme catalyses P(1),P(4)-bis(5'-guanosyl) tetraphosphate + H2O = GMP + GTP + 2 H(+). The catalysed reaction is Hydrolytically removes 5'-nucleotides successively from the 3'-hydroxy termini of 3'-hydroxy-terminated oligonucleotides.. Functionally, hydrolase that metabolizes extracellular nucleotides, including ATP, GTP, UTP and CTP. Limits mast cells and basophils response during inflammation and during the chronic phases of allergic responses by eliminating extracellular ATP, a signaling molecule activating these cells in an autocrine manner. Metabolizes extracellular ATP in the lumen of the small intestine, and thereby prevents ATP-induced apoptosis of intestinal plasmacytoid dendritic cells. Has a broad specificity and can also hydrolyze UDP-GlcNAc into UMP and GlcNAc-1-phosphate and potentially several other intracellular nucleotide sugars, including UDP-GalNAc, CMP-NeuAc, GDP-Fuc, and UDP-GlcA. Thereby, could modulate glycan biosynthesis and protein glycosylation. Can hydrolyze extracellular dinucleoside polyphosphates, including the vasoactive adenosine polyphosphates as well. In addition, displays an alkaline phosphodiesterase activity in vitro. In Bos taurus (Bovine), this protein is Ectonucleotide pyrophosphatase/phosphodiesterase family member 3 (ENPP3).